The primary structure comprises 353 residues: Tetraacyldisaccharide 4'-kinase (353 aa).

49–56 (TAGGTGKT) is an ATP binding site.

This sequence belongs to the LpxK family.

It catalyses the reaction a lipid A disaccharide + ATP = a lipid IVA + ADP + H(+). The protein operates within glycolipid biosynthesis; lipid IV(A) biosynthesis; lipid IV(A) from (3R)-3-hydroxytetradecanoyl-[acyl-carrier-protein] and UDP-N-acetyl-alpha-D-glucosamine: step 6/6. In terms of biological role, transfers the gamma-phosphate of ATP to the 4'-position of a tetraacyldisaccharide 1-phosphate intermediate (termed DS-1-P) to form tetraacyldisaccharide 1,4'-bis-phosphate (lipid IVA). The protein is Tetraacyldisaccharide 4'-kinase of Chlorobium phaeovibrioides (strain DSM 265 / 1930) (Prosthecochloris vibrioformis (strain DSM 265)).